The primary structure comprises 332 residues: Procathepsin L (332 aa).

The signal sequence occupies residues 1-17; the sequence is MHPLLFLAGLCLGVASA. Residues 18–112 constitute a propeptide, activation peptide; that stretch reads APQLYQSLDA…KVFQAPFFVE (95 aa). E121 contributes to the Zn(2+) binding site. The active site involves C137. Positions 162, 183, 198, and 208 each coordinate Zn(2+). An intrachain disulfide couples C168 to C210. N-linked (GlcNAc...) asparagine glycosylation is present at N220. Zn(2+) is bound by residues D226, D249, D272, and D274. A disulfide bond links C268 and C321. H275 is a catalytic residue. The propeptide occupies 288–290; that stretch reads ETE. N299 is an active-site residue.

This sequence belongs to the peptidase C1 family. As to quaternary structure, dimer of a heavy and a light chain linked by disulfide bonds. Interacts with Long isoform of CD74/Ii chain; the interaction stabilizes the conformation of mature CTSL. In terms of processing, during export along the endocytic pathway, pro-CTSL undergoes several proteolytic cleavages to generate the CTSL single-chain and two-chain mature forms, composed of a heavy chain linked to a light chain by disulfide bonds. Autocleavage; produces the single-chain CTSL after cleavage of the propeptide. The cleavage can be intermolecular. As to expression, expressed in the endometrium.

It is found in the lysosome. It localises to the apical cell membrane. Its subcellular location is the cytoplasmic vesicle. The protein resides in the secretory vesicle. The protein localises to the chromaffin granule. It is found in the secreted. It localises to the extracellular space. It catalyses the reaction Specificity close to that of papain. As compared to cathepsin B, cathepsin L exhibits higher activity toward protein substrates, but has little activity on Z-Arg-Arg-NHMec, and no peptidyl-dipeptidase activity.. Inhibited by the propeptide produced by autocleavage. Long isoform of CD74/Ii chain stabilizes the conformation of mature CTSL by binding to its active site and serving as a chaperone to help maintain a pool of mature enzyme in endocytic compartments and extracellular space of APCs. IFNG enhances the conversion into the CTSL mature and active form. Inhibited by CST6. Inhibited by the glycopeptide antibiotic teicoplanin. Inhibited by amantadine. Its function is as follows. Thiol protease important for the overall degradation of proteins in lysosomes. Plays a critical for normal cellular functions such as general protein turnover, antigen processing and bone remodeling. Involved in the solubilization of cross-linked TG/thyroglobulin and in the subsequent release of thyroid hormone thyroxine (T4) by limited proteolysis of TG/thyroglobulin in the thyroid follicle lumen. In neuroendocrine chromaffin cells secretory vesicles, catalyzes the prohormone proenkephalin processing to the active enkephalin peptide neurotransmitter. In thymus, regulates CD4(+) T cell positive selection by generating the major histocompatibility complex class II (MHCII) bound peptide ligands presented by cortical thymic epithelial cells. Also mediates invariant chain processing in cortical thymic epithelial cells. Major elastin-degrading enzyme at neutral pH. Accumulates as a mature and active enzyme in the extracellular space of antigen presenting cells (APCs) to regulate degradation of the extracellular matrix in the course of inflammation. Secreted form generates endostatin from COL18A1. Critical for cardiac morphology and function. Plays an important role in hair follicle morphogenesis and cycling, as well as epidermal differentiation. Required for maximal stimulation of steroidogenesis by TIMP1. The polypeptide is Procathepsin L (CTSL) (Felis catus (Cat)).